We begin with the raw amino-acid sequence, 102 residues long: Large ribosomal subunit protein bL21 (102 aa).

This sequence belongs to the bacterial ribosomal protein bL21 family. In terms of assembly, part of the 50S ribosomal subunit. Contacts protein L20.

This protein binds to 23S rRNA in the presence of protein L20. This Sorangium cellulosum (strain So ce56) (Polyangium cellulosum (strain So ce56)) protein is Large ribosomal subunit protein bL21.